We begin with the raw amino-acid sequence, 316 residues long: Methionyl-tRNA formyltransferase (316 aa).

112-115 (SLLP) lines the (6S)-5,6,7,8-tetrahydrofolate pocket.

The protein belongs to the Fmt family.

It catalyses the reaction L-methionyl-tRNA(fMet) + (6R)-10-formyltetrahydrofolate = N-formyl-L-methionyl-tRNA(fMet) + (6S)-5,6,7,8-tetrahydrofolate + H(+). In terms of biological role, attaches a formyl group to the free amino group of methionyl-tRNA(fMet). The formyl group appears to play a dual role in the initiator identity of N-formylmethionyl-tRNA by promoting its recognition by IF2 and preventing the misappropriation of this tRNA by the elongation apparatus. This is Methionyl-tRNA formyltransferase from Glaesserella parasuis serovar 5 (strain SH0165) (Haemophilus parasuis).